Consider the following 58-residue polypeptide: Large ribosomal subunit protein bL32 (58 aa).

Belongs to the bacterial ribosomal protein bL32 family.

This chain is Large ribosomal subunit protein bL32, found in Caldicellulosiruptor saccharolyticus (strain ATCC 43494 / DSM 8903 / Tp8T 6331).